The sequence spans 66 residues: Hemicalcin (66 aa).

The N-terminal stretch at 1-21 (MRASLFIVIFVVSFITISCLS) is a signal peptide. The propeptide occupies 22 to 33 (TDDEEARWIEKR). Disulfide bonds link C36-C50, C43-C54, and C49-C65. The segment at 55 to 57 (KRR) is essential for stimulation of [3H]ryanodine binding to RYR1.

This sequence belongs to the scorpion calcin family. As to expression, expressed by the venom gland.

The protein localises to the secreted. Its function is as follows. This toxin stabilizes ryanodine receptor 1 (RyR1) opening in a long-lasting subconductance state (20% and 38% of the full conductance state have been found). It promotes an increase in the opening probability at intermediate concentration. Furthermore, it triggers calcium release from sarcoplasmic vesicles (68 nM are enough to induce a sharp release, and 45% of the total calcium is released after toxin (100 nM) addition) probably by acting as a cell-penetrating peptide (CPP). In addition, it has been shown to dose-dependently stimulate ryanodine binding to RyR1 (EC(50)=6.9-71 nM). It also augments the bell-shaped calcium-[3H]ryanodine binding curve that is maximal at about 10 uM calcium concentration. It binds a different site as ryanodine. It acts synergistically with caffeine. In vivo, intracerebroventricular injection into mice induces neurotoxic symptoms, followed by death. The chain is Hemicalcin from Hemiscorpius lepturus (Scorpion).